The sequence spans 357 residues: Uroporphyrinogen decarboxylase (357 aa).

Residues 27 to 31, aspartate 77, tyrosine 154, threonine 209, and histidine 327 each bind substrate; that span reads RQAGR.

Belongs to the uroporphyrinogen decarboxylase family. In terms of assembly, homodimer.

It is found in the cytoplasm. It catalyses the reaction uroporphyrinogen III + 4 H(+) = coproporphyrinogen III + 4 CO2. It functions in the pathway porphyrin-containing compound metabolism; protoporphyrin-IX biosynthesis; coproporphyrinogen-III from 5-aminolevulinate: step 4/4. In terms of biological role, catalyzes the decarboxylation of four acetate groups of uroporphyrinogen-III to yield coproporphyrinogen-III. This is Uroporphyrinogen decarboxylase from Proteus mirabilis (strain HI4320).